We begin with the raw amino-acid sequence, 456 residues long: Nitrogenase molybdenum-iron protein beta chain (456 aa).

[8Fe-7S] cluster-binding residues include cysteine 23, cysteine 48, cysteine 106, and serine 141.

This sequence belongs to the NifD/NifK/NifE/NifN family. Tetramer of two alpha and two beta chains. Forms complex with the iron protein (nitrogenase component 2). The cofactor is [8Fe-7S] cluster.

The enzyme catalyses N2 + 8 reduced [2Fe-2S]-[ferredoxin] + 16 ATP + 16 H2O = H2 + 8 oxidized [2Fe-2S]-[ferredoxin] + 2 NH4(+) + 16 ADP + 16 phosphate + 6 H(+). Functionally, this molybdenum-iron protein is part of the nitrogenase complex that catalyzes the key enzymatic reactions in nitrogen fixation. The protein is Nitrogenase molybdenum-iron protein beta chain (nifK2) of Methanosarcina barkeri.